The sequence spans 403 residues: Large ribosomal subunit protein uL3 (403 aa).

The disordered stretch occupies residues 1 to 37 (MSHRKFSAPRHGSLGFLPRKRSSRHRGKVKSFPKDDP). Residue serine 13 is modified to Phosphoserine. Over residues 18–31 (PRKRSSRHRGKVKS) the composition is skewed to basic residues. Lysine 39 participates in a covalent cross-link: Glycyl lysine isopeptide (Lys-Gly) (interchain with G-Cter in SUMO2). Lysine 136 is subject to N6-acetyllysine. Glycyl lysine isopeptide (Lys-Gly) (interchain with G-Cter in SUMO2) cross-links involve residues lysine 224 and lysine 226. Histidine 245 bears the Tele-methylhistidine mark. N6-acetyllysine; alternate is present on residues lysine 286 and lysine 294. Residue lysine 286 forms a Glycyl lysine isopeptide (Lys-Gly) (interchain with G-Cter in SUMO2); alternate linkage. Lysine 294 is covalently cross-linked (Glycyl lysine isopeptide (Lys-Gly) (interchain with G-Cter in SUMO1); alternate). Serine 304 bears the Phosphoserine mark. Lysine 366 is subject to N6-acetyllysine; alternate. Lysine 366 participates in a covalent cross-link: Glycyl lysine isopeptide (Lys-Gly) (interchain with G-Cter in SUMO2); alternate. Lysine 373 is modified (N6-acetyllysine). Glycyl lysine isopeptide (Lys-Gly) (interchain with G-Cter in SUMO2) cross-links involve residues lysine 386, lysine 393, and lysine 399.

This sequence belongs to the universal ribosomal protein uL3 family. Component of the large ribosomal subunit. Interacts with DHX33. In terms of processing, constitutively monomethylated at His-245 by METTL18. Methylation at His-245 regulates translation elongation by slowing ribosome traversal on tyrosine codons: slower elongation provides enough time for proper folding of synthesized proteins and prevents cellular aggregation of tyrosine-rich proteins. It is not required for incorporation of RPL3 into ribosomes.

It is found in the nucleus. Its subcellular location is the nucleolus. It localises to the cytoplasm. Functionally, component of the large ribosomal subunit. The ribosome is a large ribonucleoprotein complex responsible for the synthesis of proteins in the cell. This chain is Large ribosomal subunit protein uL3 (RPL3), found in Homo sapiens (Human).